The sequence spans 543 residues: Glucose transporter HT1 (543 aa).

Residues M1–T24 are disordered. Residues M1–C38 lie on the Cytoplasmic side of the membrane. A compositionally biased stretch (polar residues) spans E7–S19. The chain crosses the membrane as a helical span at residues I39 to V59. Topologically, residues Y60–G120 are extracellular. N90 and N91 each carry an N-linked (GlcNAc...) asparagine glycan. Residues L121–L141 form a helical membrane-spanning segment. Topologically, residues S142–K147 are cytoplasmic. Residues M148–T168 form a helical membrane-spanning segment. Over R169–T172 the chain is Extracellular. Residues L173–A193 form a helical membrane-spanning segment. The Cytoplasmic portion of the chain corresponds to S194–V212. The chain crosses the membrane as a helical span at residues L213 to V233. Residues K234–M248 are Extracellular-facing. Residues Q249–V269 form a helical membrane-spanning segment. Over R270–G300 the chain is Cytoplasmic. A helical transmembrane segment spans residues P301–M321. At N322–E337 the chain is on the extracellular side. The helical transmembrane segment at G338–S358 threads the bilayer. Over R359–Q364 the chain is Cytoplasmic. Residues L365–V385 traverse the membrane as a helical segment. Residues Y386 to T400 lie on the Extracellular side of the membrane. A helical transmembrane segment spans residues V401–L421. The Cytoplasmic portion of the chain corresponds to A422–S436. Residues F437–V457 form a helical membrane-spanning segment. The Extracellular portion of the chain corresponds to E458–K470. The helical transmembrane segment at G471–L491 threads the bilayer. Over R492–A543 the chain is Cytoplasmic. The span at T503–N519 shows a compositional bias: polar residues. Residues T503 to A543 form a disordered region.

Belongs to the major facilitator superfamily. Sugar transporter (TC 2.A.1.1) family.

Its subcellular location is the membrane. In terms of biological role, facilitative glucose transporter. Binds D-fructose and cytochalasin-B, but not D-galactose. The polypeptide is Glucose transporter HT1 (HT1) (Trypanosoma vivax (Duttonella vivax)).